The following is a 504-amino-acid chain: D-alanine--D-alanyl carrier protein ligase (504 aa).

152 to 153 (TS) serves as a coordination point for ATP. Asp-197 provides a ligand contact to D-alanine. 292–297 (NTYGPT) serves as a coordination point for ATP. Val-301 is a D-alanine binding site. ATP-binding positions include Asp-383, 394–397 (YNGR), and Lys-492. Lys-492 contacts D-alanine.

This sequence belongs to the ATP-dependent AMP-binding enzyme family. DltA subfamily.

Its subcellular location is the cytoplasm. The catalysed reaction is holo-[D-alanyl-carrier protein] + D-alanine + ATP = D-alanyl-[D-alanyl-carrier protein] + AMP + diphosphate. The protein operates within cell wall biogenesis; lipoteichoic acid biosynthesis. In terms of biological role, catalyzes the first step in the D-alanylation of lipoteichoic acid (LTA), the activation of D-alanine and its transfer onto the D-alanyl carrier protein (Dcp) DltC. In an ATP-dependent two-step reaction, forms a high energy D-alanyl-AMP intermediate, followed by transfer of the D-alanyl residue as a thiol ester to the phosphopantheinyl prosthetic group of the Dcp. D-alanylation of LTA plays an important role in modulating the properties of the cell wall in Gram-positive bacteria, influencing the net charge of the cell wall. This is D-alanine--D-alanyl carrier protein ligase from Bacillus cereus (strain ZK / E33L).